Consider the following 259-residue polypeptide: MRFDVITLFPELFGPFLVSGVTRRAYETGLVEVKLWNPRDFAEGSYRRVDDRPFGGGPGMVMMAEPLTLCLEQIRAERTAGGVADVPTVLFSPIGEALNHAGVEAWSASSGAVLVCGRYEGLDQRFIETHIDRQISLGDFVLSGGEIAAMALLDAVARLQPGVLNDEGSHQLDSFNPALDGLLDCPHYTRPESWRGQPVPPILLSGNHAQIERWRREERLALTQRQRPELVQKARAAGHLTARDEAFLADLFENPEQDA.

S-adenosyl-L-methionine-binding positions include Gly117 and 137 to 142; that span reads LGDFVL.

The protein belongs to the RNA methyltransferase TrmD family. Homodimer.

Its subcellular location is the cytoplasm. The catalysed reaction is guanosine(37) in tRNA + S-adenosyl-L-methionine = N(1)-methylguanosine(37) in tRNA + S-adenosyl-L-homocysteine + H(+). Specifically methylates guanosine-37 in various tRNAs. In Polaromonas sp. (strain JS666 / ATCC BAA-500), this protein is tRNA (guanine-N(1)-)-methyltransferase.